We begin with the raw amino-acid sequence, 211 residues long: C-type lectin domain family 2 member L (211 aa).

Residues 1-53 form a disordered region; the sequence is MEPAREPPARARPPPPAARPAPAAPRPRSPAEAEARGPEGLLRRSGSGYEGST. Over residues 10 to 28 the composition is skewed to pro residues; the sequence is RARPPPPAARPAPAAPRPR. Position 29 is a phosphoserine (Ser29). The chain crosses the membrane as a helical span at residues 66-86; that stretch reads LLLGAIAVLLFAILVVMSILA. Residues 104 to 206 enclose the C-type lectin domain; sequence YGRKCYYFSE…CLTTRPWVCS (103 aa). 2 cysteine pairs are disulfide-bonded: Cys125/Cys205 and Cys184/Cys197.

It is found in the membrane. The protein is C-type lectin domain family 2 member L (Clec2l) of Mus musculus (Mouse).